The primary structure comprises 478 residues: MPAPKSIIIVGSGVFGLSTAHAMSQNNEFASSKITLIDSWNFEPSGPSASAPNPSAANFDTSRIIRSDYSHRTYATLAREAQQKWKADWGADGRYRNQSIVMIGEGHSMKQPMKALESINYVKHAYAQSYERAGRNSDIVHILDSESAVWEALGLGTPDEASKAGPNASELRGYRNHNCGWAESGATMAWLRQKTIHSDRIDIHIGQVVGLRVCSDSPSESHVNAEPRVCGVILDDGSQLTADLTVLAAGAMTPRLLGSPTLCDVYSETVAYVQLTEMERRELVRREFPLIVNVARKIFAIGPDNQGFLKLARFSWSGYRDVQKFAGVDVGPRSQAAPQEEDGYGACGDLDQTKLSPDVESTLQDYRGFLRELFRSGDGGDLGGLRNIATRPFAQVRRCWYADTVSTDFIVDYHPAYGKSLFIATGGSDHAFKFLPVLGERICELILQSDNGKAGPSESIQELQRLWKFPGGDSHAKL.

The first 22 residues, 1–22 (MPAPKSIIIVGSGVFGLSTAHA), serve as a signal peptide directing secretion. Residues valine 14, phenylalanine 15, aspartate 38, asparagine 53, alanine 57, asparagine 58, arginine 63, and isoleucine 64 each coordinate FAD. N-linked (GlcNAc...) asparagine glycosylation is found at asparagine 97 and asparagine 167. FAD is bound at residue valine 208. S-8alpha-FAD cysteine is present on cysteine 399. FAD is bound by residues phenylalanine 432 and lysine 433.

Belongs to the MSOX/MTOX family. Dimer. FAD serves as cofactor.

The protein operates within secondary metabolite biosynthesis. In terms of biological role, nonribosomal peptide synthetase; part of the gene cluster that mediates the biosynthesis of imizoquins A to D, tripeptide-derived alkaloids that serve a protective role against oxidative stress that are essential for normal germination. ImqB is a canonical three-module NRPS that assembles the tripeptide backbone of the imizoquins via condensation of Trp, Tyr, and Leu-derived precursors. N-methylation by imqF and phenol oxidation by imqC, followed by cyclization via the FAD-dependent oxidase imqH carry out the three-step transformation of L-tyrosine into tetrahydroisoquinoline. Importantly, this sequence requires the presence of a free amine in the tyrosine moiety, indicating that isoquinoline formation occurs prior to peptide bond formation. The imidazolidin-4-one ring of imizoquins could form following additional oxidation of the methyl-derived bridgehead carbon by imqH. Lastly, O-methylation by imqG and leucine hydroxylation by imqE complete biosynthesis of the imizoquins. The polypeptide is Amino acid oxidase imqH (Aspergillus flavus (strain ATCC 200026 / FGSC A1120 / IAM 13836 / NRRL 3357 / JCM 12722 / SRRC 167)).